Consider the following 465-residue polypeptide: Cysteine--tRNA ligase (465 aa).

Cys28 contacts Zn(2+). Residues 30–40 (PTVYNYIHIGN) carry the 'HIGH' region motif. Positions 208, 233, and 237 each coordinate Zn(2+). The short motif at 265–269 (KMSKS) is the 'KMSKS' region element. Lys268 provides a ligand contact to ATP.

It belongs to the class-I aminoacyl-tRNA synthetase family. Monomer. Zn(2+) is required as a cofactor.

It is found in the cytoplasm. The catalysed reaction is tRNA(Cys) + L-cysteine + ATP = L-cysteinyl-tRNA(Cys) + AMP + diphosphate. The chain is Cysteine--tRNA ligase from Exiguobacterium sibiricum (strain DSM 17290 / CCUG 55495 / CIP 109462 / JCM 13490 / 255-15).